Reading from the N-terminus, the 217-residue chain is UPF0173 metal-dependent hydrolase MJ1163 (217 aa).

The protein belongs to the UPF0173 family.

The chain is UPF0173 metal-dependent hydrolase MJ1163 from Methanocaldococcus jannaschii (strain ATCC 43067 / DSM 2661 / JAL-1 / JCM 10045 / NBRC 100440) (Methanococcus jannaschii).